The chain runs to 457 residues: CUB1 family protein C30C2.08 (457 aa).

2 coiled-coil regions span residues 119-174 and 418-448; these read TQND…NISK and QELVNSLLTQCHQLIEELRDEKHQHDIEERE.

This sequence belongs to the CUB1 family.

The protein localises to the cytoplasm. It is found in the nucleus. Functionally, involved in bleomycin tolerance with links to DNA repair and/or proteasome function. The chain is CUB1 family protein C30C2.08 from Schizosaccharomyces pombe (strain 972 / ATCC 24843) (Fission yeast).